We begin with the raw amino-acid sequence, 228 residues long: MPDPSDRKAVTRYLEQTHDKIFESNRAWVASKKGADPEFFNKLAAGQSPEYLYIGCSDSRVPANEIMGLDAGEVFVHRNIANVVPTIDLSSMSVINYAVGHLKVKHIVVCGHYNCGGVQAALTPTDLGILNPWLRNIRDVYRLHEKELDAIEDDGERFNRLVELNVIESCRSVIKTAVVQQSYEENGFPIVHGWVFNLKDGLLKDLNIDFPGILADIQKIYNLTKGSS.

Zn(2+)-binding residues include Cys-56, Asp-58, His-112, and Cys-115.

This sequence belongs to the beta-class carbonic anhydrase family. It depends on Zn(2+) as a cofactor.

The catalysed reaction is hydrogencarbonate + H(+) = CO2 + H2O. In terms of biological role, catalyzes the reversible hydration of CO(2) to H(2)CO(3). The main role may be to provide inorganic carbon for the bicarbonate-dependent carboxylation reactions catalyzed by pyruvate carboxylase, acetyl-CoA carboxylase and carbamoyl-phosphate synthetase. Involved in osmoadaptation. This Emericella nidulans (strain FGSC A4 / ATCC 38163 / CBS 112.46 / NRRL 194 / M139) (Aspergillus nidulans) protein is Carbonic anhydrase.